The following is a 265-amino-acid chain: 3-methyl-2-oxobutanoate hydroxymethyltransferase (265 aa).

Asp45 and Asp84 together coordinate Mg(2+). 3-methyl-2-oxobutanoate is bound by residues 45 to 46 (DS), Asp84, and Lys112. Glu114 contacts Mg(2+). Residue Glu181 is the Proton acceptor of the active site.

The protein belongs to the PanB family. In terms of assembly, homodecamer; pentamer of dimers. Mg(2+) serves as cofactor.

The protein resides in the cytoplasm. It catalyses the reaction 3-methyl-2-oxobutanoate + (6R)-5,10-methylene-5,6,7,8-tetrahydrofolate + H2O = 2-dehydropantoate + (6S)-5,6,7,8-tetrahydrofolate. Its pathway is cofactor biosynthesis; (R)-pantothenate biosynthesis; (R)-pantoate from 3-methyl-2-oxobutanoate: step 1/2. Its function is as follows. Catalyzes the reversible reaction in which hydroxymethyl group from 5,10-methylenetetrahydrofolate is transferred onto alpha-ketoisovalerate to form ketopantoate. This is 3-methyl-2-oxobutanoate hydroxymethyltransferase from Yersinia enterocolitica serotype O:8 / biotype 1B (strain NCTC 13174 / 8081).